A 217-amino-acid chain; its full sequence is 8-oxoguanine DNA glycosylase/AP lyase (217 aa).

Active-site residues include Lys-138 and Asp-157.

This sequence belongs to the type-2 OGG1 family.

The catalysed reaction is 2'-deoxyribonucleotide-(2'-deoxyribose 5'-phosphate)-2'-deoxyribonucleotide-DNA = a 3'-end 2'-deoxyribonucleotide-(2,3-dehydro-2,3-deoxyribose 5'-phosphate)-DNA + a 5'-end 5'-phospho-2'-deoxyribonucleoside-DNA + H(+). In terms of biological role, catalyzes the excision of an oxidatively damaged form of guanine (7,8-dihydro-8-oxoguanine = 8-oxoG) from DNA. Also cleaves the DNA backbone at apurinic/apyrimidinic sites (AP sites). In Fusobacterium nucleatum subsp. nucleatum (strain ATCC 25586 / DSM 15643 / BCRC 10681 / CIP 101130 / JCM 8532 / KCTC 2640 / LMG 13131 / VPI 4355), this protein is 8-oxoguanine DNA glycosylase/AP lyase.